Here is a 141-residue protein sequence, read N- to C-terminus: Large ribosomal subunit protein uL11 (141 aa).

Belongs to the universal ribosomal protein uL11 family. As to quaternary structure, part of the ribosomal stalk of the 50S ribosomal subunit. Interacts with L10 and the large rRNA to form the base of the stalk. L10 forms an elongated spine to which L12 dimers bind in a sequential fashion forming a multimeric L10(L12)X complex. One or more lysine residues are methylated.

Forms part of the ribosomal stalk which helps the ribosome interact with GTP-bound translation factors. The chain is Large ribosomal subunit protein uL11 from Campylobacter concisus (strain 13826).